Here is a 127-residue protein sequence, read N- to C-terminus: uncharacterized protein (127 aa).

An N-terminal signal peptide occupies residues methionine 1–serine 16. Cysteine 17 carries N-palmitoyl cysteine lipidation. Residue cysteine 17 is the site of S-diacylglycerol cysteine attachment. Residues glutamate 56–serine 101 adopt a coiled-coil conformation. The disordered stretch occupies residues serine 101 to lysine 127.

Its subcellular location is the cell membrane. This is an uncharacterized protein from Rickettsia felis (strain ATCC VR-1525 / URRWXCal2) (Rickettsia azadi).